The chain runs to 229 residues: Acetate kinase EutQ (229 aa).

The interval 1 to 100 is required for interaction with EutM; the sequence is MKKLITANDI…EKVLKEKQSL (100 aa).

This sequence belongs to the EutQ cupin-like family. In terms of assembly, homodimer. Interacts with the N-terminus of EutM; a probably cytoplasm-facing helix (EutM 'Val-49' to 'Gln-64') interacts with N-terminus of EutQ. Requires Does not need divalent cations. as cofactor.

It localises to the bacterial microcompartment. It carries out the reaction acetate + ATP = acetyl phosphate + ADP. It functions in the pathway amine and polyamine degradation; ethanolamine degradation. In terms of biological role, a bidirectional acetate kinase that may drive flux through the ethanolamine (EA) degradation pathway under anoxic conditions found when this bacteria infects the host intestine. It may generate ATP that can be used by other enzymes (EutA and EutT) in the eut pathway. Can use GTP instead of ATP with reduced efficiency. Might be required to correctly target EutE to bacterial microcompartments (BMC). Required for the biogenesis of multiple mobile BMCs per cell. Might serve as an assembly hub for BMC shell proteins. Expression of eutK, eutL, eutM, eutN, eutS (eutSMNLK) in E.coli leads to formation of a single BMC; coexpression of eutQ with eutSMNLK permits E.coli to make cells with more than one mobile BMC, as is usual in vivo. EutS alone also forms BMCs, but in the presence of eutQ both BMCs and protein filaments are formed. Functionally, expression of the eut operon allows this bacteria to use ethanolamine (EA) as a carbon, nitrogen and energy source. It relies on cobalamin (vitamin B12) both as a cofactor for the ethanolamine ammonia-lyase (EAL) activity and to induce the operon. EA enhances bacterial survival in macrophages in a concentration-dependent manner, suggesting it is an important nutrient during infection. This is Acetate kinase EutQ (eutQ) from Salmonella typhimurium (strain LT2 / SGSC1412 / ATCC 700720).